The chain runs to 279 residues: MNSEQSIRELGNEVPSEDLELPGRKTSNFQVLQPCRDEGASAECSIVECGKNYEPVISHQVIPDLNKETSVAYLQKELEILRASNTKLQEKLAKEDKEKRRLKLKLELQEKAAEADIAERTAALVEEVYFAQRERDEAIMCRLQLALKERDEAIAHVKHMEMSLKMLENINPKENDMTLQELLDRINNADTGIAIQKNGAVIVDTIYKTTGCRKRITAEEMSAVLEERDAALSQCKQLHQRLLDLKKQNQTSTNNTKHPTAKNNQEHTLKYNLNIASIN.

Positions 1-11 are enriched in basic and acidic residues; it reads MNSEQSIRELG. The segment at 1–21 is disordered; the sequence is MNSEQSIRELGNEVPSEDLEL. 2 coiled-coil regions span residues 65 to 169 and 218 to 255; these read LNKE…MLEN and AEEMSAVLEERDAALSQCKQLHQRLLDLKKQNQTSTNN. The tract at residues 247-268 is disordered; it reads KQNQTSTNNTKHPTAKNNQEHT. Positions 248–263 are enriched in polar residues; that stretch reads QNQTSTNNTKHPTAKN.

This chain is Mirror-image polydactyly gene 1 protein homolog (Mipol1), found in Mus musculus (Mouse).